The primary structure comprises 110 residues: Thiosulfate sulfurtransferase GlpE (110 aa).

In terms of domain architecture, Rhodanese spans 17-105; it reads KKEGAVVVDI…WRATYPAETA (89 aa). The Cysteine persulfide intermediate role is filled by cysteine 65.

It belongs to the GlpE family.

The protein resides in the cytoplasm. It catalyses the reaction thiosulfate + hydrogen cyanide = thiocyanate + sulfite + 2 H(+). The catalysed reaction is thiosulfate + [thioredoxin]-dithiol = [thioredoxin]-disulfide + hydrogen sulfide + sulfite + 2 H(+). In terms of biological role, transferase that catalyzes the transfer of sulfur from thiosulfate to thiophilic acceptors such as cyanide or dithiols. May function in a CysM-independent thiosulfate assimilation pathway by catalyzing the conversion of thiosulfate to sulfite, which can then be used for L-cysteine biosynthesis. The protein is Thiosulfate sulfurtransferase GlpE of Pseudomonas putida (strain ATCC 700007 / DSM 6899 / JCM 31910 / BCRC 17059 / LMG 24140 / F1).